Consider the following 299-residue polypeptide: Probable lipid kinase YegS (299 aa).

Positions 2–133 (AEFPASLLIL…IDMAQVNKQT (132 aa)) constitute a DAGKc domain. ATP-binding positions include threonine 40, 66-72 (GDGTINE), and threonine 95. 3 residues coordinate Mg(2+): leucine 215, aspartate 218, and leucine 220. The Proton acceptor role is filled by glutamate 271.

It belongs to the diacylglycerol/lipid kinase family. YegS lipid kinase subfamily. Mg(2+) serves as cofactor. It depends on Ca(2+) as a cofactor.

It localises to the cytoplasm. Functionally, probably phosphorylates lipids; the in vivo substrate is unknown. This is Probable lipid kinase YegS from Shigella boydii serotype 18 (strain CDC 3083-94 / BS512).